A 196-amino-acid chain; its full sequence is Charged multivesicular body protein 1a (196 aa).

Residues 5 to 41 (LFQLKFTAKQLEKLAKKAEKDSNTEQAKVKKALQQKN) are a coiled coil. Over residues 170–181 (QGASSVGESSTR) the composition is skewed to polar residues. The disordered stretch occupies residues 170-196 (QGASSVGESSTRTQEDQLSRRLASLRN). The MIT-interacting motif signature appears at 185–195 (DQLSRRLASLR).

The protein belongs to the SNF7 family. Probable peripherally associated component of the endosomal sorting required for transport complex III (ESCRT-III).

It is found in the cytoplasm. Its subcellular location is the endosome membrane. Probable peripherally associated component of the endosomal sorting required for transport complex III (ESCRT-III) which is involved in multivesicular bodies (MVBs) formation and sorting of endosomal cargo proteins into MVBs. MVBs contain intraluminal vesicles (ILVs) that are generated by invagination and scission from the limiting membrane of the endosome and mostly are delivered to lysosomes enabling degradation of membrane proteins, such as stimulated growth factor receptors, lysosomal enzymes and lipids. In Xenopus laevis (African clawed frog), this protein is Charged multivesicular body protein 1a (chmp1a).